We begin with the raw amino-acid sequence, 46 residues long: uncharacterized protein (46 aa).

A disordered region spans residues 1–46; sequence MNFGIKPDVSSGPRKGGPFKELSDFSKTSPTPQQPRSLSGKSVMLP. A compositionally biased stretch (polar residues) spans 25-40; the sequence is FSKTSPTPQQPRSLSG.

This is an uncharacterized protein from Dictyostelium discoideum (Social amoeba).